Consider the following 178-residue polypeptide: Fatty-acid and retinol-binding protein 1 (178 aa).

A signal peptide spans 1–16 (MYHQLILMALIGVIMA). Residues N44 and N75 are each glycosylated (N-linked (GlcNAc...) asparagine). Coiled coils occupy residues 67-89 (DAALEALKNKSDKLYQKAVELRN) and 123-153 (KLDVEKLKQAARDIIAKYEALNEETKEELKA). N157 carries an N-linked (GlcNAc...) asparagine glycan.

The protein belongs to the fatty-acid and retinol-binding protein (FARBP) family. N-glycosylated.

It localises to the secreted. Binds retinol and different fatty acids. This Acanthocheilonema viteae (Filarial nematode worm) protein is Fatty-acid and retinol-binding protein 1.